The following is a 187-amino-acid chain: UPF0301 protein YqgE (187 aa).

This sequence belongs to the UPF0301 (AlgH) family.

This is UPF0301 protein YqgE from Salmonella paratyphi B (strain ATCC BAA-1250 / SPB7).